We begin with the raw amino-acid sequence, 146 residues long: Ubiquitin-conjugating enzyme E2 variant 1D (146 aa).

The UBC core domain occupies 13–146 (PRNFRLLEEL…LVQPPEGTCF (134 aa)).

The protein belongs to the ubiquitin-conjugating enzyme family. As to quaternary structure, heterodimer with UBC35 or UBC36. As to expression, expressed in roots, shoots, leaves, stems, flowers and pollen.

Functionally, has no ubiquitin ligase activity on its own. The heterodimer with UBC catalyzes the synthesis of non-canonical poly-ubiquitin chains that are linked through 'Lys-63'. This type of poly-ubiquitination does not lead to protein degradation by the proteasome. Mediates transcriptional activation of target genes. May play a role in the control of progress through the cell cycle and differentiation. Involved in the error-free DNA repair pathway and contributes to the survival of cells after DNA damage. The chain is Ubiquitin-conjugating enzyme E2 variant 1D (UEV1D) from Arabidopsis thaliana (Mouse-ear cress).